The following is a 210-amino-acid chain: HTH-type transcriptional repressor FabR (210 aa).

An HTH tetR-type domain is found at Lys10 to Leu70. A DNA-binding region (H-T-H motif) is located at residues Ser33–Phe52.

As to quaternary structure, homodimer.

It is found in the cytoplasm. Functionally, represses the transcription of fabB, involved in unsaturated fatty acid (UFA) biosynthesis. By controlling UFA production, FabR directly influences the physical properties of the membrane bilayer. The chain is HTH-type transcriptional repressor FabR from Klebsiella pneumoniae subsp. pneumoniae (strain ATCC 700721 / MGH 78578).